The following is a 199-amino-acid chain: dITP/XTP pyrophosphatase (199 aa).

7–12 is a substrate binding site; sequence TGNAGK. Residues glutamate 37 and aspartate 66 each contribute to the Mg(2+) site. Residue aspartate 66 is the Proton acceptor of the active site. Residues serine 67, 146-149, lysine 169, and 174-175 contribute to the substrate site; these read FGYD and HR.

It belongs to the HAM1 NTPase family. As to quaternary structure, homodimer. Mg(2+) serves as cofactor.

It carries out the reaction XTP + H2O = XMP + diphosphate + H(+). The catalysed reaction is dITP + H2O = dIMP + diphosphate + H(+). It catalyses the reaction ITP + H2O = IMP + diphosphate + H(+). Functionally, pyrophosphatase that catalyzes the hydrolysis of nucleoside triphosphates to their monophosphate derivatives, with a high preference for the non-canonical purine nucleotides XTP (xanthosine triphosphate), dITP (deoxyinosine triphosphate) and ITP. Seems to function as a house-cleaning enzyme that removes non-canonical purine nucleotides from the nucleotide pool, thus preventing their incorporation into DNA/RNA and avoiding chromosomal lesions. This Deinococcus geothermalis (strain DSM 11300 / CIP 105573 / AG-3a) protein is dITP/XTP pyrophosphatase.